The sequence spans 141 residues: Hydroperoxide reductase (141 aa).

This sequence belongs to the OsmC/Ohr family. Homodimer.

The protein localises to the cytoplasm. In terms of biological role, reduces organic and inorganic peroxide substrates. Protects the cell against oxidative stress. This chain is Hydroperoxide reductase, found in Mycoplasma pneumoniae (strain ATCC 29342 / M129 / Subtype 1) (Mycoplasmoides pneumoniae).